We begin with the raw amino-acid sequence, 285 residues long: HTH-type transcriptional regulator MurR (285 aa).

Residues 1-77 enclose the HTH rpiR-type domain; sequence MLYLTKISNA…MALIGEYSAS (77 aa). Positions 37–56 form a DNA-binding region, H-T-H motif; it reads SRQMAKQLGISQSSIVKFAQ. An SIS domain is found at 128-268; sequence IIEVISKAPF…FVGLVQLNDV (141 aa).

As to quaternary structure, homotetramer.

Its pathway is amino-sugar metabolism; N-acetylmuramate degradation [regulation]. Represses the expression of the murPQ operon involved in the uptake and degradation of N-acetylmuramic acid (MurNAc). Binds to two adjacent inverted repeats within the operator region. MurNAc 6-phosphate, the substrate of MurQ, is the specific inducer that weakens binding of MurR to the operator. This chain is HTH-type transcriptional regulator MurR, found in Escherichia coli (strain K12 / MC4100 / BW2952).